A 1072-amino-acid polypeptide reads, in one-letter code: Carbamoyl phosphate synthase large chain (1072 aa).

A carboxyphosphate synthetic domain region spans residues 1–401 (MPKRLDINTI…SLLKAVRSLE (401 aa)). Residues Arg-129, Arg-169, Gly-175, Gly-176, Lys-208, Ile-210, Glu-215, Gly-241, Val-242, His-243, Gln-284, and Glu-298 each coordinate ATP. Residues 133 to 327 (RTLMQELNEP…IAKLAAKIAV (195 aa)) form the ATP-grasp 1 domain. The Mg(2+) site is built by Gln-284, Glu-298, and Asn-300. The Mn(2+) site is built by Gln-284, Glu-298, and Asn-300. Positions 402-546 (LGIYHLELDH…YSTYADENEL (145 aa)) are oligomerization domain. The carbamoyl phosphate synthetic domain stretch occupies residues 547–929 (IVTDRKSVVV…ALYKGLVASG (383 aa)). Residues 671–861 (EAALTKLGIP…MANVATKVIL (191 aa)) form the ATP-grasp 2 domain. Positions 707, 746, 752, 777, 778, 779, 780, 820, and 832 each coordinate ATP. Mg(2+) is bound by residues Gln-820, Glu-832, and Asn-834. Mn(2+)-binding residues include Gln-820, Glu-832, and Asn-834. Positions 930 to 1072 (INIPTHGSVI…QTKRHEVVHA (143 aa)) constitute an MGS-like domain. Residues 930–1072 (INIPTHGSVI…QTKRHEVVHA (143 aa)) form an allosteric domain region.

Belongs to the CarB family. Composed of two chains; the small (or glutamine) chain promotes the hydrolysis of glutamine to ammonia, which is used by the large (or ammonia) chain to synthesize carbamoyl phosphate. Tetramer of heterodimers (alpha,beta)4. The cofactor is Mg(2+). It depends on Mn(2+) as a cofactor.

The enzyme catalyses hydrogencarbonate + L-glutamine + 2 ATP + H2O = carbamoyl phosphate + L-glutamate + 2 ADP + phosphate + 2 H(+). It catalyses the reaction hydrogencarbonate + NH4(+) + 2 ATP = carbamoyl phosphate + 2 ADP + phosphate + 2 H(+). Its pathway is amino-acid biosynthesis; L-arginine biosynthesis; carbamoyl phosphate from bicarbonate: step 1/1. It functions in the pathway pyrimidine metabolism; UMP biosynthesis via de novo pathway; (S)-dihydroorotate from bicarbonate: step 1/3. In terms of biological role, large subunit of the glutamine-dependent carbamoyl phosphate synthetase (CPSase). CPSase catalyzes the formation of carbamoyl phosphate from the ammonia moiety of glutamine, carbonate, and phosphate donated by ATP, constituting the first step of 2 biosynthetic pathways, one leading to arginine and/or urea and the other to pyrimidine nucleotides. The large subunit (synthetase) binds the substrates ammonia (free or transferred from glutamine from the small subunit), hydrogencarbonate and ATP and carries out an ATP-coupled ligase reaction, activating hydrogencarbonate by forming carboxy phosphate which reacts with ammonia to form carbamoyl phosphate. The protein is Carbamoyl phosphate synthase large chain of Bacillus anthracis (strain A0248).